Consider the following 261-residue polypeptide: Proteasome subunit alpha type-4 (261 aa).

Phosphoserine is present on residues Ser-13 and Ser-75. At Lys-127 the chain carries N6-acetyllysine. Ser-173 bears the Phosphoserine mark. Residue Lys-176 is modified to N6-acetyllysine. The disordered stretch occupies residues 240 to 261; that stretch reads HEEEEAKAEREKKEKEQKEKDK.

This sequence belongs to the peptidase T1A family. As to quaternary structure, the 26S proteasome consists of a 20S proteasome core and two 19S regulatory subunits. The 20S proteasome core is a barrel-shaped complex made of 28 subunits that are arranged in four stacked rings. The two outer rings are each formed by seven alpha subunits, and the two inner rings are formed by seven beta subunits. The proteolytic activity is exerted by three beta-subunits PSMB5, PSMB6 and PSMB7.

It is found in the cytoplasm. Its subcellular location is the nucleus. Its function is as follows. Component of the 20S core proteasome complex involved in the proteolytic degradation of most intracellular proteins. This complex plays numerous essential roles within the cell by associating with different regulatory particles. Associated with two 19S regulatory particles, forms the 26S proteasome and thus participates in the ATP-dependent degradation of ubiquitinated proteins. The 26S proteasome plays a key role in the maintenance of protein homeostasis by removing misfolded or damaged proteins that could impair cellular functions, and by removing proteins whose functions are no longer required. Associated with the PA200 or PA28, the 20S proteasome mediates ubiquitin-independent protein degradation. This type of proteolysis is required in several pathways including spermatogenesis (20S-PA200 complex) or generation of a subset of MHC class I-presented antigenic peptides (20S-PA28 complex). The sequence is that of Proteasome subunit alpha type-4 (PSMA4) from Bos taurus (Bovine).